The sequence spans 111 residues: UPF0339 protein BP0521 (111 aa).

2 consecutive repeat copies span residues 9–57 and 60–108. Positions 86–111 are disordered; that stretch reads TQARDNGIASVKSNAPGAPTKDQTQA.

Belongs to the UPF0339 family. Duplicated subfamily.

The protein is UPF0339 protein BP0521 of Bordetella pertussis (strain Tohama I / ATCC BAA-589 / NCTC 13251).